The sequence spans 441 residues: Glutamate-1-semialdehyde 2,1-aminomutase (441 aa).

K275 carries the post-translational modification N6-(pyridoxal phosphate)lysine.

It belongs to the class-III pyridoxal-phosphate-dependent aminotransferase family. HemL subfamily. As to quaternary structure, homodimer. It depends on pyridoxal 5'-phosphate as a cofactor.

Its subcellular location is the cytoplasm. It catalyses the reaction (S)-4-amino-5-oxopentanoate = 5-aminolevulinate. The protein operates within porphyrin-containing compound metabolism; protoporphyrin-IX biosynthesis; 5-aminolevulinate from L-glutamyl-tRNA(Glu): step 2/2. The polypeptide is Glutamate-1-semialdehyde 2,1-aminomutase (Deinococcus deserti (strain DSM 17065 / CIP 109153 / LMG 22923 / VCD115)).